Consider the following 146-residue polypeptide: Deoxyuridine 5'-triphosphate nucleotidohydrolase (146 aa).

Substrate contacts are provided by residues 66–68 (RSG), asparagine 79, 83–85 (TVD), and lysine 93.

It belongs to the dUTPase family. It depends on Mg(2+) as a cofactor.

It carries out the reaction dUTP + H2O = dUMP + diphosphate + H(+). It functions in the pathway pyrimidine metabolism; dUMP biosynthesis; dUMP from dCTP (dUTP route): step 2/2. Its function is as follows. This enzyme is involved in nucleotide metabolism: it produces dUMP, the immediate precursor of thymidine nucleotides and it decreases the intracellular concentration of dUTP so that uracil cannot be incorporated into DNA. In Fusobacterium nucleatum subsp. nucleatum (strain ATCC 25586 / DSM 15643 / BCRC 10681 / CIP 101130 / JCM 8532 / KCTC 2640 / LMG 13131 / VPI 4355), this protein is Deoxyuridine 5'-triphosphate nucleotidohydrolase.